The following is a 630-amino-acid chain: Mesothelin (630 aa).

The first 36 residues, methionine 1–threonine 36, serve as a signal peptide directing secretion. Residue asparagine 57 is glycosylated (N-linked (GlcNAc...) asparagine). Phosphoserine; by FAM20C is present on serine 200. The tract at residues serine 262–arginine 286 is required for megakaryocyte-potentiating factor activity. Residues cysteine 302 and cysteine 326 are joined by a disulfide bond. Residues asparagine 388, asparagine 496, and asparagine 523 are each glycosylated (N-linked (GlcNAc...) asparagine). Serine 606 carries the GPI-anchor amidated serine lipid modification. Positions glycine 607–alanine 630 are cleaved as a propeptide — removed in mature form.

This sequence belongs to the mesothelin family. As to quaternary structure, interacts with MUC16. Post-translationally, both MPF and the cleaved form of mesothelin are N-glycosylated. Proteolytically cleaved by a furin-like convertase to generate megakaryocyte-potentiating factor (MPF), and the cleaved form of mesothelin. In terms of tissue distribution, expressed in lung. Expressed at low levels in heart, placenta and kidney. Expressed in mesothelial cells. Highly expressed in mesotheliomas, ovarian cancers, and some squamous cell carcinomas (at protein level).

It localises to the cell membrane. The protein localises to the golgi apparatus. Its subcellular location is the secreted. Membrane-anchored forms may play a role in cellular adhesion. In terms of biological role, megakaryocyte-potentiating factor (MPF) potentiates megakaryocyte colony formation in vitro. The polypeptide is Mesothelin (MSLN) (Homo sapiens (Human)).